The primary structure comprises 132 residues: Small ribosomal subunit protein uS8 (132 aa).

It belongs to the universal ribosomal protein uS8 family. In terms of assembly, part of the 30S ribosomal subunit. Contacts proteins S5 and S12.

In terms of biological role, one of the primary rRNA binding proteins, it binds directly to 16S rRNA central domain where it helps coordinate assembly of the platform of the 30S subunit. This is Small ribosomal subunit protein uS8 from Heliobacterium modesticaldum (strain ATCC 51547 / Ice1).